Here is a 127-residue protein sequence, read N- to C-terminus: Large ribosomal subunit protein eL8 (127 aa).

The protein belongs to the eukaryotic ribosomal protein eL8 family. As to quaternary structure, part of the 50S ribosomal subunit. Component of box C/D small ribonucleoprotein (sRNP) particles that contain rpl7ae, FlpA and nop5, plus a guide RNA. These sRNP particles form homodimers, giving rise to an asymmetric holoenzyme. Probably part of the RNase P complex.

It is found in the cytoplasm. Its function is as follows. Multifunctional RNA-binding protein that recognizes the K-turn motif in ribosomal RNA, the RNA component of RNase P, box H/ACA, box C/D and box C'/D' sRNAs. The protein is Large ribosomal subunit protein eL8 of Saccharolobus solfataricus (strain ATCC 35092 / DSM 1617 / JCM 11322 / P2) (Sulfolobus solfataricus).